The following is a 496-amino-acid chain: Serine/threonine-protein kinase Sgk3 (496 aa).

Residues 12 to 124 (SCPSVSIPSS…AFLQMDSPRH (113 aa)) form the PX domain. Residues 121-157 (SPRHQSDPSEDEDERSTPKPHSTSRNINLGPTGNPHA) form a disordered region. 2 positions are modified to phosphoserine: serine 126 and serine 129. The span at 139-151 (KPHSTSRNINLGP) shows a compositional bias: polar residues. A Protein kinase domain is found at 162–464 (FDFLKVIGKG…EETVPYSVCV (303 aa)). ATP is bound by residues 168 to 176 (IGKGSFGKV) and lysine 191. The short motif at 195-205 (KKIVLNRKEQK) is the Nuclear localization signal element. Aspartate 286 functions as the Proton acceptor in the catalytic mechanism. At threonine 320 the chain carries Phosphothreonine; by PDPK1. Residues 420–496 (ESLSWTDLVQ…YAPPSEDLFL (77 aa)) form the AGC-kinase C-terminal domain. Phosphoserine is present on serine 486.

It belongs to the protein kinase superfamily. AGC Ser/Thr protein kinase family. In terms of assembly, interacts with GSK3B and FLII. Interacts with PDPK1 in a phosphorylation-dependent manner. Activated by phosphorylation on Ser-486 by an unknown kinase (may be mTORC2 but not confirmed), transforming it into a substrate for PDPK1 which then phosphorylates it on Thr-320.

It is found in the cytoplasmic vesicle. The protein localises to the early endosome. The protein resides in the recycling endosome. The catalysed reaction is L-seryl-[protein] + ATP = O-phospho-L-seryl-[protein] + ADP + H(+). It carries out the reaction L-threonyl-[protein] + ATP = O-phospho-L-threonyl-[protein] + ADP + H(+). With respect to regulation, two specific sites, one in the kinase domain (Thr-320) and the other in the C-terminal regulatory region (Ser-486), need to be phosphorylated for its full activation. Serine/threonine-protein kinase which is involved in the regulation of a wide variety of ion channels, membrane transporters, cell growth, proliferation, survival and migration. Up-regulates Na(+) channels: SCNN1A/ENAC and SCN5A, K(+) channels: KCNA3/KV1.3, KCNE1, KCNQ1 and KCNH2/HERG, epithelial Ca(2+) channels: TRPV5 and TRPV6, chloride channel: BSND, creatine transporter: SLC6A8, Na(+)/dicarboxylate cotransporter: SLC13A2/NADC1, Na(+)-dependent phosphate cotransporter: SLC34A2/NAPI-2B, amino acid transporters: SLC1A5/ASCT2 and SLC6A19, glutamate transporters: SLC1A3/EAAT1, SLC1A6/EAAT4 and SLC1A7/EAAT5, glutamate receptors: GRIA1/GLUR1 and GRIK2/GLUR6, Na(+)/H(+) exchanger: SLC9A3/NHE3, and the Na(+)/K(+) ATPase. Plays a role in the regulation of renal tubular phosphate transport and bone density. Phosphorylates NEDD4L and GSK3B. Positively regulates ER transcription activity through phosphorylation of FLII. Negatively regulates the function of ITCH/AIP4 via its phosphorylation and thereby prevents CXCR4 from being efficiently sorted to lysosomes. The chain is Serine/threonine-protein kinase Sgk3 (Sgk3) from Rattus norvegicus (Rat).